The sequence spans 216 residues: RNA pyrophosphohydrolase (216 aa).

A Nudix hydrolase domain is found at 6-149 (GFRPNVGIIL…KRDVYQLALT (144 aa)). The short motif at 38–59 (GGIKYGETPMQAMYRELHEETG) is the Nudix box element. Residues 159–180 (AQRTDKSRGPRAPRYPRVSNGH) are disordered.

Belongs to the Nudix hydrolase family. RppH subfamily. The cofactor is a divalent metal cation.

Accelerates the degradation of transcripts by removing pyrophosphate from the 5'-end of triphosphorylated RNA, leading to a more labile monophosphorylated state that can stimulate subsequent ribonuclease cleavage. This Burkholderia thailandensis (strain ATCC 700388 / DSM 13276 / CCUG 48851 / CIP 106301 / E264) protein is RNA pyrophosphohydrolase.